The sequence spans 349 residues: Threonine-rich protein (349 aa).

An N-terminal signal peptide occupies residues 1–19 (MKGLTLACIAATVVAASHA). An N-linked (GlcNAc...) asparagine glycan is attached at asparagine 257. Residues 300-326 (QPDVSPMSVRKRRQAESAEEDDDLVGD) are disordered. Over residues 316-326 (SAEEDDDLVGD) the composition is skewed to acidic residues. The stretch at 316–349 (SAEEDDDLVGDMEDLKELEQEIQEALEEVEKLDV) forms a coiled coil.

As to expression, component of the acid-insoluble and acid-soluble organic matrix of calcified layers of the shell (at protein level).

The protein resides in the secreted. The protein is Threonine-rich protein of Lottia gigantea (Giant owl limpet).